Here is a 504-residue protein sequence, read N- to C-terminus: Maturase K (504 aa).

The protein belongs to the intron maturase 2 family. MatK subfamily.

The protein resides in the plastid. It is found in the chloroplast. Functionally, usually encoded in the trnK tRNA gene intron. Probably assists in splicing its own and other chloroplast group II introns. This chain is Maturase K, found in Gossypium barbadense (Sea Island cotton).